The following is a 31-amino-acid chain: Cytochrome b6-f complex subunit 6 (31 aa).

The helical transmembrane segment at 4–24 (ITSYFGFLLAALTITSAIFIG) threads the bilayer.

The protein belongs to the PetL family. As to quaternary structure, the 4 large subunits of the cytochrome b6-f complex are cytochrome b6, subunit IV (17 kDa polypeptide, PetD), cytochrome f and the Rieske protein, while the 4 small subunits are PetG, PetL, PetM and PetN. The complex functions as a dimer.

Its subcellular location is the plastid. It localises to the chloroplast thylakoid membrane. Its function is as follows. Component of the cytochrome b6-f complex, which mediates electron transfer between photosystem II (PSII) and photosystem I (PSI), cyclic electron flow around PSI, and state transitions. PetL is important for photoautotrophic growth as well as for electron transfer efficiency and stability of the cytochrome b6-f complex. The protein is Cytochrome b6-f complex subunit 6 of Ficus carica (Common fig).